Consider the following 232-residue polypeptide: Large ribosomal subunit protein uL1 (232 aa).

It belongs to the universal ribosomal protein uL1 family. In terms of assembly, part of the 50S ribosomal subunit.

Binds directly to 23S rRNA. The L1 stalk is quite mobile in the ribosome, and is involved in E site tRNA release. Its function is as follows. Protein L1 is also a translational repressor protein, it controls the translation of the L11 operon by binding to its mRNA. The sequence is that of Large ribosomal subunit protein uL1 from Jannaschia sp. (strain CCS1).